Reading from the N-terminus, the 274-residue chain is 1D-myo-inositol 2-acetamido-2-deoxy-alpha-D-glucopyranoside deacetylase 2 (274 aa).

Residues H6, D9, and H140 each coordinate Zn(2+).

The protein belongs to the MshB deacetylase family. It depends on Zn(2+) as a cofactor.

It carries out the reaction 1D-myo-inositol 2-acetamido-2-deoxy-alpha-D-glucopyranoside + H2O = 1D-myo-inositol 2-amino-2-deoxy-alpha-D-glucopyranoside + acetate. Its function is as follows. Catalyzes the deacetylation of 1D-myo-inositol 2-acetamido-2-deoxy-alpha-D-glucopyranoside (GlcNAc-Ins) in the mycothiol biosynthesis pathway. The protein is 1D-myo-inositol 2-acetamido-2-deoxy-alpha-D-glucopyranoside deacetylase 2 of Saccharopolyspora erythraea (strain ATCC 11635 / DSM 40517 / JCM 4748 / NBRC 13426 / NCIMB 8594 / NRRL 2338).